Reading from the N-terminus, the 204-residue chain is N-(5'-phosphoribosyl)anthranilate isomerase (204 aa).

The protein belongs to the TrpF family.

The catalysed reaction is N-(5-phospho-beta-D-ribosyl)anthranilate = 1-(2-carboxyphenylamino)-1-deoxy-D-ribulose 5-phosphate. Its pathway is amino-acid biosynthesis; L-tryptophan biosynthesis; L-tryptophan from chorismate: step 3/5. The chain is N-(5'-phosphoribosyl)anthranilate isomerase from Bacillus cereus (strain AH187).